The primary structure comprises 357 residues: NADH-quinone oxidoreductase subunit H (357 aa).

Helical transmembrane passes span 18 to 38, 92 to 112, 127 to 147, 165 to 185, 206 to 226, 268 to 288, 294 to 314, and 329 to 349; these read VAWM…PIIL, VLFV…WAVV, LLYI…AGWA, VSYE…SGSL, FLSW…ISAV, ILLS…PIDI, IPGW…FVWF, and LGWK…AIWM.

This sequence belongs to the complex I subunit 1 family. As to quaternary structure, NDH-1 is composed of 14 different subunits. Subunits NuoA, H, J, K, L, M, N constitute the membrane sector of the complex.

The protein resides in the cell inner membrane. The enzyme catalyses a quinone + NADH + 5 H(+)(in) = a quinol + NAD(+) + 4 H(+)(out). Its function is as follows. NDH-1 shuttles electrons from NADH, via FMN and iron-sulfur (Fe-S) centers, to quinones in the respiratory chain. The immediate electron acceptor for the enzyme in this species is believed to be ubiquinone. Couples the redox reaction to proton translocation (for every two electrons transferred, four hydrogen ions are translocated across the cytoplasmic membrane), and thus conserves the redox energy in a proton gradient. This subunit may bind ubiquinone. The chain is NADH-quinone oxidoreductase subunit H from Bordetella bronchiseptica (strain ATCC BAA-588 / NCTC 13252 / RB50) (Alcaligenes bronchisepticus).